The chain runs to 540 residues: Light-independent protochlorophyllide reductase subunit B (540 aa).

Residue Asp36 participates in [4Fe-4S] cluster binding. Asp292 (proton donor) is an active-site residue. A substrate-binding site is contributed by 428–429; sequence GL. The interval 451-490 is disordered; it reads SNVASGVEPSTPSVSSEVSASSSASPEASAPTPSPDGDMV. Residues 457–481 show a composition bias toward low complexity; it reads VEPSTPSVSSEVSASSSASPEASAP.

This sequence belongs to the ChlB/BchB/BchZ family. Protochlorophyllide reductase is composed of three subunits; BchL, BchN and BchB. Forms a heterotetramer of two BchB and two BchN subunits. The cofactor is [4Fe-4S] cluster.

The enzyme catalyses chlorophyllide a + oxidized 2[4Fe-4S]-[ferredoxin] + 2 ADP + 2 phosphate = protochlorophyllide a + reduced 2[4Fe-4S]-[ferredoxin] + 2 ATP + 2 H2O. It functions in the pathway porphyrin-containing compound metabolism; bacteriochlorophyll biosynthesis (light-independent). Its function is as follows. Component of the dark-operative protochlorophyllide reductase (DPOR) that uses Mg-ATP and reduced ferredoxin to reduce ring D of protochlorophyllide (Pchlide) to form chlorophyllide a (Chlide). This reaction is light-independent. The NB-protein (BchN-BchB) is the catalytic component of the complex. The polypeptide is Light-independent protochlorophyllide reductase subunit B (Chlorobium chlorochromatii (strain CaD3)).